Here is a 424-residue protein sequence, read N- to C-terminus: Inhibin beta A chain (424 aa).

A signal peptide spans 1–20 (MPLLWLRGFLLASCWIIVRS). The propeptide occupies 21–308 (SPTPGSEGHG…EDHPHRRRRR (288 aa)). Asparagine 165 carries an N-linked (GlcNAc...) asparagine glycan. The segment covering 264 to 275 (EVDGDGKKKDGS) has biased composition (basic and acidic residues). The tract at residues 264–306 (EVDGDGKKKDGSDGGLEEEKEQSHRPFLMLQARQSEDHPHRRR) is disordered. 4 disulfide bridges follow: cysteine 312-cysteine 320, cysteine 319-cysteine 389, cysteine 348-cysteine 421, and cysteine 352-cysteine 423.

Belongs to the TGF-beta family. As to quaternary structure, dimeric, linked by one or more disulfide bonds. Inhibin A is a dimer of alpha/INHA and beta-A/INHBA. Activin A is a homodimer of beta-A/INHBA. Activin AB is a dimer of beta-A/INHBA and beta-B/INHBB. Interacts with FST and FSTL3; these interactions prevent activin A interaction to its type II receptor. Activin A interacts with ACVR2A. Activin A interacts with BMPR2. Inhibin A interacts with ACVR1; this interaction creates a non-signaling complex (NSC) that inhibits ACVR1-mediated BMP signaling. Inhibin A interacts with ACVR2A. In terms of tissue distribution, uterus, ovary and liver.

It is found in the secreted. Inhibins/activins are involved in regulating a number of diverse functions such as hypothalamic and pituitary hormone secretion, gonadal hormone secretion, germ cell development and maturation, erythroid differentiation, insulin secretion, nerve cell survival, embryonic axial development or bone growth, depending on their subunit composition. In terms of biological role, activin A is a homodimer of INHBA that plays a role in several essential biological processes including embryonic development, stem cell maintenance and differentiation, haematopoiesis, cell proliferation and tissue fibrosis. Signals through type I (such as ACVR1B or ACVR1C) and type II receptors (such as ACVR2A, ACVR2B or BMPR2) which, upon ligand binding, phosphorylate SMAD2 and SMAD3 intracellular signaling mediators that form a complex with SMAD4, translocate to the nucleus and modulate gene expression. Can also activate alternative non-canonical intracellular signaling pathways including the p38 MAPK, extracellular signal-regulated kinases 1/2 (ERK1/2) and c-Jun N-terminal kinases (JNKs) to modulate cell migration and differentiation. Alternatively, promotes osteoblastic differentiation via ACVRL1-SMAD1/5/9 pathway. In addition, can engage the type I receptor ACVR1 to form an ACVR1-activin A-type II receptor non-signaling complex (NSC) that renders receptors unavailable for engagement with BMPs, hence resulting in an apparent inhibition of ACVR1-mediated BMP signaling. Its function is as follows. Inhibin A is a dimer of alpha/INHA and beta-A/INHBA that functions as a feedback regulator in the hypothalamic-pituitary-gonadal (HPG) axis. Inhibits the secretion of FSH from the anterior pituitary gland by acting on pituitary gonadotrope cells. Antagonizes activin A by binding to the proteoglycan, betaglycan, and forming a stable complex with and, thereby, sequestering type II activin receptors while excluding type I receptor. The protein is Inhibin beta A chain (Inhba) of Mus musculus (Mouse).